The following is a 490-amino-acid chain: Myocilin (490 aa).

A signal peptide spans 1-18 (MPAVQLLLLACLLGGVGA). Positions 51–170 (GQAMLAIQEL…QEVASLRRGQ (120 aa)) form a coiled coil. The interval 152–186 (LARRLESSSQEVASLRRGQCPQAHSSSQDVPSGSR) is disordered. Residues 173–182 (QAHSSSQDVP) are compositionally biased toward polar residues. The 260-residue stretch at 230–489 (GCGELVWVGE…MVSYDIKLSR (260 aa)) folds into the Olfactomedin-like domain. A disulfide bond links C231 and C419. D366, N414, A415, I463, and D464 together coordinate Ca(2+). Residues 488–490 (SRL) carry the Microbody targeting signal motif.

In terms of assembly, homodimer (via N-terminus). Can also form higher oligomers. Interacts with OLFM3, FN1, NRCAM, GLDN and NFASC. Interacts (via N-terminus) with MYL2. Interacts with SFRP1, FRZB, FZD7, FZD10, FZD1 and WIF1; regulates Wnt signaling. Interacts with SNTA1; regulates muscle hypertrophy. Interacts with ERBB2 and ERBB3; activates ERBB2-ERBB3 signaling pathway. Interacts with SNCG; affects its secretion and its aggregation. In terms of processing, palmitoylated. Undergoes a calcium-dependent proteolytic cleavage at Gln-212 by CAPN2 in the endoplasmic reticulum. The result is the production of two fragments, one of 35 kDa containing the C-terminal olfactomedin-like domain, and another of 20 kDa containing the N-terminal leucine zipper-like domain. Post-translationally, glycosylated. In terms of tissue distribution, the myocilin 35 kDa fragment is detected in iris and ciliary body.

It localises to the secreted. Its subcellular location is the golgi apparatus. The protein resides in the cytoplasmic vesicle. The protein localises to the extracellular space. It is found in the extracellular matrix. It localises to the extracellular exosome. Its subcellular location is the mitochondrion. The protein resides in the mitochondrion intermembrane space. The protein localises to the mitochondrion inner membrane. It is found in the mitochondrion outer membrane. It localises to the rough endoplasmic reticulum. Its subcellular location is the cell projection. The protein resides in the cilium. The protein localises to the endoplasmic reticulum. Functionally, secreted glycoprotein regulating the activation of different signaling pathways in adjacent cells to control different processes including cell adhesion, cell-matrix adhesion, cytoskeleton organization and cell migration. Promotes substrate adhesion, spreading and formation of focal contacts. Negatively regulates cell-matrix adhesion and stress fiber assembly through Rho protein signal transduction. Modulates the organization of actin cytoskeleton by stimulating the formation of stress fibers through interactions with components of Wnt signaling pathways. Promotes cell migration through activation of PTK2 and the downstream phosphatidylinositol 3-kinase signaling. Plays a role in bone formation and promotes osteoblast differentiation in a dose-dependent manner through mitogen-activated protein kinase signaling. Mediates myelination in the peripheral nervous system through ERBB2/ERBB3 signaling. Plays a role as a regulator of muscle hypertrophy through the components of dystrophin-associated protein complex. Involved in positive regulation of mitochondrial depolarization. Plays a role in neurite outgrowth. May participate in the obstruction of fluid outflow in the trabecular meshwork. This is Myocilin (MYOC) from Bos taurus (Bovine).